Here is a 283-residue protein sequence, read N- to C-terminus: Methylamine utilization ferredoxin-type protein MauN (283 aa).

2 4Fe-4S ferredoxin-type domains span residues 217-248 (VRVS…PALK) and 251-280 (GSPL…MASR). 8 residues coordinate [4Fe-4S] cluster: Cys-227, Cys-230, Cys-233, Cys-237, Cys-260, Cys-263, Cys-266, and Cys-270.

Its pathway is one-carbon metabolism; methylamine degradation. Involved in electron transfer. The sequence is that of Methylamine utilization ferredoxin-type protein MauN (mauN) from Paracoccus denitrificans (strain Pd 1222).